Reading from the N-terminus, the 247-residue chain is DNA-directed RNA polymerase subunit Rpo3 (247 aa).

Belongs to the archaeal Rpo3/eukaryotic RPB3 RNA polymerase subunit family. Part of the RNA polymerase complex.

Its subcellular location is the cytoplasm. It carries out the reaction RNA(n) + a ribonucleoside 5'-triphosphate = RNA(n+1) + diphosphate. In terms of biological role, DNA-dependent RNA polymerase (RNAP) catalyzes the transcription of DNA into RNA using the four ribonucleoside triphosphates as substrates. This chain is DNA-directed RNA polymerase subunit Rpo3, found in Natronomonas pharaonis (strain ATCC 35678 / DSM 2160 / CIP 103997 / JCM 8858 / NBRC 14720 / NCIMB 2260 / Gabara) (Halobacterium pharaonis).